Here is a 151-residue protein sequence, read N- to C-terminus: Caveolin-3 (151 aa).

Residues 1–83 (MMTEEHTDLE…RLLSTLLGVP (83 aa)) lie on the Cytoplasmic side of the membrane. Lys38 participates in a covalent cross-link: Glycyl lysine isopeptide (Lys-Gly) (interchain with G-Cter in SUMO3). The required for interaction with DAG1 stretch occupies residues 64–114 (TFTVSKYWCYRLLSTLLGVPLALLWGFLFACISFCHIWAVVPCIKSYLIEI). The helical intramembrane region spans 84 to 104 (LALLWGFLFACISFCHIWAVV). Residues 105 to 151 (PCIKSYLIEIQCISHIYSLCIRTFCNPLFAALGQVCSNIKVVLRREG) are Cytoplasmic-facing.

The protein belongs to the caveolin family. As to quaternary structure, homooligomer. Interacts with DYSF. Interacts with DLG1 and KCNA5; forms a ternary complex. Interacts with DAG1 (via its C-terminal); the interaction prevents binding of DAG1 with DMD. Interacts with TRIM72. Interacts with MUSK; may regulate MUSK signaling. Interacts with POPDC1. Interacts with CAVIN1, CAVIN2 and CAVIN4. Post-translationally, sumoylation with SUMO3 by PIAS4 may reduce agonist-induced internalization and desensitization of adrenergic receptor ABRD2. Expressed predominantly in muscle.

Its subcellular location is the golgi apparatus membrane. It is found in the cell membrane. The protein localises to the membrane. The protein resides in the caveola. It localises to the sarcolemma. May act as a scaffolding protein within caveolar membranes. Interacts directly with G-protein alpha subunits and can functionally regulate their activity. May also regulate voltage-gated potassium channels. Plays a role in the sarcolemma repair mechanism of both skeletal muscle and cardiomyocytes that permits rapid resealing of membranes disrupted by mechanical stress. Mediates the recruitment of CAVIN2 and CAVIN3 proteins to the caveolae. The polypeptide is Caveolin-3 (Mus musculus (Mouse)).